The sequence spans 76 residues: Large ribosomal subunit protein uL29 (76 aa).

This sequence belongs to the universal ribosomal protein uL29 family.

The protein is Large ribosomal subunit protein uL29 of Corynebacterium glutamicum (strain R).